Consider the following 155-residue polypeptide: Small ribosomal subunit protein bS6 (155 aa).

Residues 115 to 137 show a composition bias toward basic and acidic residues; sequence EADAAKAEADAARVEAEAKKAET. Positions 115–155 are disordered; it reads EADAAKAEADAARVEAEAKKAETDETDETVDAETPENEEEN. The span at 138–155 shows a compositional bias: acidic residues; that stretch reads DETDETVDAETPENEEEN.

This sequence belongs to the bacterial ribosomal protein bS6 family.

Functionally, binds together with bS18 to 16S ribosomal RNA. The polypeptide is Small ribosomal subunit protein bS6 (Desulforapulum autotrophicum (strain ATCC 43914 / DSM 3382 / VKM B-1955 / HRM2) (Desulfobacterium autotrophicum)).